A 422-amino-acid polypeptide reads, in one-letter code: Histidine--tRNA ligase (422 aa).

Belongs to the class-II aminoacyl-tRNA synthetase family. As to quaternary structure, homodimer.

Its subcellular location is the cytoplasm. The catalysed reaction is tRNA(His) + L-histidine + ATP = L-histidyl-tRNA(His) + AMP + diphosphate + H(+). The sequence is that of Histidine--tRNA ligase from Lysinibacillus sphaericus (strain C3-41).